A 629-amino-acid chain; its full sequence is MFYPDPFDVIIIGGGHAGTEAAMAAARMGQQTLLLTHNIDTLGQMSCNPAIGGIGKGHLVKEVDALGGLMAKAIDQAGIQFRILNASKGPAVRATRAQADRVLYRQAVRTALENQPNLMIFQQAVEDLIVENDRVVGAVTQMGLKFRAKAVVLTVGTFLDGKIHIGLDNYSGGRAGDPPSIPLSRRLRELPLRVGRLKTGTPPRIDARTIDFSVLAQQHGDNPMPVFSFMGNASQHPQQVPCYITHTNEKTHDVIRSNLDRSPMYAGVIEGVGPRYCPSIEDKVMRFADRNQHQIFLEPEGLTSNEIYPNGISTSLPFDVQMQIVRSMQGMENAKIVRPGYAIEYDFFDPRDLKPTLESKFIQGLFFAGQINGTTGYEEAAAQGLLVGLNAARLSADKEGWAPARSQAYLGVLVDDLCTLGTKEPYRMFTSRAEYRLMLREDNADLRLTEIGRELGLVDDERWARFNEKLENIERERQRLKSTWVTPSAEAAAEVNAHLTAPLSREASGEDLLRRPEMTYEKLTTLTPFAPALTDEQAAEQVEIQVKYEGYIARQQDEIEKQLRNENTLLPATLDYRQVSGLSNEVIAKLNDHKPASIGQASRISGVTPAAISILLVWLKKQGMLRRSA.

FAD is bound by residues 13 to 18 (GGGHAG), valine 125, and serine 180. 273 to 287 (GPRYCPSIEDKVMRF) lines the NAD(+) pocket. FAD is bound at residue glutamine 370.

This sequence belongs to the MnmG family. Homodimer. Heterotetramer of two MnmE and two MnmG subunits. FAD serves as cofactor.

The protein resides in the cytoplasm. NAD-binding protein involved in the addition of a carboxymethylaminomethyl (cmnm) group at the wobble position (U34) of certain tRNAs, forming tRNA-cmnm(5)s(2)U34. This Shigella sonnei (strain Ss046) protein is tRNA uridine 5-carboxymethylaminomethyl modification enzyme MnmG.